The primary structure comprises 568 residues: Sulfite reductase [NADPH] hemoprotein beta-component (568 aa).

Cys-425, Cys-431, Cys-470, and Cys-474 together coordinate [4Fe-4S] cluster. Cys-474 contributes to the siroheme binding site.

It belongs to the nitrite and sulfite reductase 4Fe-4S domain family. As to quaternary structure, alpha(8)-beta(8). The alpha component is a flavoprotein, the beta component is a hemoprotein. The cofactor is siroheme. [4Fe-4S] cluster is required as a cofactor.

The enzyme catalyses hydrogen sulfide + 3 NADP(+) + 3 H2O = sulfite + 3 NADPH + 4 H(+). Its pathway is sulfur metabolism; hydrogen sulfide biosynthesis; hydrogen sulfide from sulfite (NADPH route): step 1/1. Functionally, component of the sulfite reductase complex that catalyzes the 6-electron reduction of sulfite to sulfide. This is one of several activities required for the biosynthesis of L-cysteine from sulfate. This is Sulfite reductase [NADPH] hemoprotein beta-component from Xanthomonas oryzae pv. oryzae (strain MAFF 311018).